We begin with the raw amino-acid sequence, 605 residues long: Apoptosis-inducing factor 3 (605 aa).

The tract at residues Lys-22–Thr-45 is disordered. A Rieske domain is found at Ala-70–Val-165. The [2Fe-2S] cluster site is built by Cys-109, His-111, Cys-128, and His-131. Residues Gly-201–Ala-205, Arg-235, Lys-240, Val-270, Asp-467, and Trp-514 contribute to the FAD site.

This sequence belongs to the FAD-dependent oxidoreductase family. As to expression, ubiquitous. Expressed in bone marrow, cerebral cortex, liver, ovary, thymus, thyroid gland and tongue (at protein level).

It localises to the mitochondrion. Induces apoptosis through a caspase dependent pathway. Reduces mitochondrial membrane potential. The protein is Apoptosis-inducing factor 3 (AIFM3) of Homo sapiens (Human).